Consider the following 208-residue polypeptide: Transcription factor atf-4 homolog (208 aa).

Disordered regions lie at residues 18–47 (HNQT…YFNP) and 106–165 (ERRS…EKEE). Low complexity predominate over residues 110-120 (NSSASPASNWS). Residues 121 to 141 (SDEHDSQSEKSYHPYKTPEKK) show a composition bias toward basic and acidic residues. Residues 138 to 201 (PEKKERKKAQ…RYFKKFMTEM (64 aa)) enclose the bZIP domain. A basic motif region spans residues 140–163 (KKERKKAQNRLAATRYREKKRREK). Positions 173–187 (LSVTNGKLKDQVSEL) are leucine-zipper.

The protein belongs to the bZIP family.

The protein localises to the nucleus. Transcription factor. Involved in positively modulating longevity and stress tolerance, probably acting by positively regulating expression of transsulfuration enzyme cth-2, leading to increased hydrogen sulfide production and therefore increased protein persulfidation, a protective modification of redox-reactive cysteines. May mediate longevity and increased stress resistance induced by mTORC1 suppression. The chain is Transcription factor atf-4 homolog from Caenorhabditis elegans.